The chain runs to 110 residues: NAD(P)H-quinone oxidoreductase subunit M (110 aa).

Belongs to the complex I NdhM subunit family. As to quaternary structure, NDH-1 can be composed of about 15 different subunits; different subcomplexes with different compositions have been identified which probably have different functions.

Its subcellular location is the cellular thylakoid membrane. The catalysed reaction is a plastoquinone + NADH + (n+1) H(+)(in) = a plastoquinol + NAD(+) + n H(+)(out). It catalyses the reaction a plastoquinone + NADPH + (n+1) H(+)(in) = a plastoquinol + NADP(+) + n H(+)(out). NDH-1 shuttles electrons from an unknown electron donor, via FMN and iron-sulfur (Fe-S) centers, to quinones in the respiratory and/or the photosynthetic chain. The immediate electron acceptor for the enzyme in this species is believed to be plastoquinone. Couples the redox reaction to proton translocation, and thus conserves the redox energy in a proton gradient. Cyanobacterial NDH-1 also plays a role in inorganic carbon-concentration. The chain is NAD(P)H-quinone oxidoreductase subunit M from Synechococcus elongatus (strain ATCC 33912 / PCC 7942 / FACHB-805) (Anacystis nidulans R2).